We begin with the raw amino-acid sequence, 349 residues long: Homeobox-leucine zipper protein HOX5 (349 aa).

Residues 83–142 (APEKKRRLTAEQVQMLERSFEEENKLEPERKTELARRLGMAPRQVAVWFQNRRARWKTKQ) constitute a DNA-binding region (homeobox). The tract at residues 141–185 (KQLEHDFDRLKAAYDALAADHHALLSDNDRLRAQVISLTEKLQDK) is leucine-zipper. The interval 181–253 (KLQDKETSPS…GTNDDGDGGA (73 aa)) is disordered. Residues 188 to 198 (SPSSATITTAA) show a composition bias toward low complexity.

This sequence belongs to the HD-ZIP homeobox family. Class I subfamily. Homodimer. May form a heterodimer with HOX4. As to expression, expressed in seedlings, roots, leaves, nodes, internodes, flowers and embryo.

The protein localises to the nucleus. In terms of biological role, probable transcription activator that binds to the DNA sequence 5'-CAAT[AT]ATTG-3'. This chain is Homeobox-leucine zipper protein HOX5 (HOX5), found in Oryza sativa subsp. japonica (Rice).